The sequence spans 1957 residues: [F-actin]-monooxygenase MICAL2 (1957 aa).

Residues 2 to 494 (GENEDEKQAQ…KHLYITKELE (493 aa)) are monooxygenase domain. FAD-binding positions include Cys-97, 116 to 118 (EKR), 123 to 125 (RNN), Phe-183, Tyr-298, and Asp-398. The Calponin-homology (CH) domain occupies 516–619 (DIRPSKLLTW…MVMYLSKFYE (104 aa)). Ser-631 carries the post-translational modification Phosphoserine. Positions 660–681 (RKRTPRVDGQTGENDMNKRRRK) match the Nuclear localization signal motif. Disordered regions lie at residues 660-714 (RKRT…NQNK) and 886-942 (QNKL…HPSH). Over residues 687–714 (DEPSNFSSRSLGSNQECGSSKEGGNQNK) the composition is skewed to polar residues. The span at 899–910 (PPSPPSRLPSPD) shows a compositional bias: pro residues. The span at 911–925 (PAASSSPSTVDSASP) shows a compositional bias: low complexity. In terms of domain architecture, LIM zinc-binding spans 1000–1062 (DTCYFCKKRV…KPHFIHCKTN (63 aa)). Zn(2+) contacts are provided by Cys-1002, Cys-1005, His-1023, Cys-1026, Cys-1029, Cys-1032, Cys-1052, and His-1055. Disordered stretches follow at residues 1070–1143 (AELK…PSEW), 1168–1243 (SEDS…TPSK), 1258–1345 (VNKR…LYLP), 1361–1431 (GEDG…EGGP), 1467–1626 (KAGE…SPPC), and 1675–1779 (ESRQ…KEKK). The span at 1185-1195 (SHTEPCEEKPW) shows a compositional bias: basic and acidic residues. Over residues 1232–1243 (RANSFQSPTPSK) the composition is skewed to polar residues. Residues 1275 to 1294 (LPSSSSHSSSPPSSSSTSVS) show a composition bias toward low complexity. The span at 1302-1316 (SPPQMTASEPLSQVS) shows a compositional bias: polar residues. Positions 1324-1363 (TPNFRRRAVAQGAPREIPLYLPHHPKPEWAEYCLVSPGED) are interaction with MAPK1. 2 stretches are compositionally biased toward basic and acidic residues: residues 1388 to 1402 (SNHRDPHPIWGKDRS) and 1413 to 1431 (GEDREKGSTGARKEEEGGP). Residues 1485-1496 (VLKPVRPLLLPR) are compositionally biased toward low complexity. The span at 1552–1562 (GGKKAWAKQES) shows a compositional bias: basic and acidic residues. Residues 1570-1579 (CTRSFSLRKT) are compositionally biased toward polar residues. Ser-1688 bears the Phosphoserine mark. The segment covering 1718 to 1733 (APPPPPPPPPPPPPPT) has biased composition (pro residues). The span at 1751–1762 (ASSSASSTSSSS) shows a compositional bias: low complexity. One can recognise a bMERB domain in the interval 1796-1945 (KQEELKRLYK…EKAEDQHFES (150 aa)).

Belongs to the Mical family. In terms of assembly, interacts with PLXNA4. Interacts with RAB1B. Interacts with MAPK1/ERK2. Interacts with RAB35, RAB8A, RAB10, RAB13 and RAB15 (in their GTP-bound forms); binding to RAB35 is of low affinity compared to other Rab proteins; at least in case of RAB8A may bind 2 molecules of RAB8A simultaneously through a high and a low affinity binding site, respectively. May interact with MAPK1/ERK2. Interacts with CORO1C; this interaction recruits MICAL2 to the actin filaments. The cofactor is FAD.

It localises to the nucleus. Its subcellular location is the cytoplasm. The catalysed reaction is L-methionyl-[F-actin] + NADPH + O2 + H(+) = L-methionyl-(R)-S-oxide-[F-actin] + NADP(+) + H2O. Specifically inhibited by CCG-1423, a small molecule inhibitor of SRF:MKL1/MRTF-A-dependent transcription. Its function is as follows. Methionine monooxygenase that promotes depolymerization of F-actin by mediating oxidation of residues 'Met-44' and 'Met-47' on actin to form methionine-sulfoxide, resulting in actin filament disassembly and preventing repolymerization. Regulates the disassembly of branched actin networks also by oxidizing ARP3B-containing ARP2/3 complexes leading to ARP3B dissociation from the network. Acts as a key regulator of the SRF signaling pathway elicited by nerve growth factor and serum: mediates oxidation and subsequent depolymerization of nuclear actin, leading to increase MKL1/MRTF-A presence in the nucleus and promote SRF:MKL1/MRTF-A-dependent gene transcription. Does not activate SRF:MKL1/MRTF-A through RhoA. In Homo sapiens (Human), this protein is [F-actin]-monooxygenase MICAL2.